Here is a 211-residue protein sequence, read N- to C-terminus: Probable nicotinate-nucleotide adenylyltransferase (211 aa).

The protein belongs to the NadD family.

It carries out the reaction nicotinate beta-D-ribonucleotide + ATP + H(+) = deamido-NAD(+) + diphosphate. It functions in the pathway cofactor biosynthesis; NAD(+) biosynthesis; deamido-NAD(+) from nicotinate D-ribonucleotide: step 1/1. Functionally, catalyzes the reversible adenylation of nicotinate mononucleotide (NaMN) to nicotinic acid adenine dinucleotide (NaAD). The chain is Probable nicotinate-nucleotide adenylyltransferase from Cellvibrio japonicus (strain Ueda107) (Pseudomonas fluorescens subsp. cellulosa).